The sequence spans 450 residues: UDP-N-acetylmuramoylalanine--D-glutamate ligase (450 aa).

115–121 (GTNGKTT) lines the ATP pocket.

Belongs to the MurCDEF family.

It is found in the cytoplasm. It catalyses the reaction UDP-N-acetyl-alpha-D-muramoyl-L-alanine + D-glutamate + ATP = UDP-N-acetyl-alpha-D-muramoyl-L-alanyl-D-glutamate + ADP + phosphate + H(+). Its pathway is cell wall biogenesis; peptidoglycan biosynthesis. Functionally, cell wall formation. Catalyzes the addition of glutamate to the nucleotide precursor UDP-N-acetylmuramoyl-L-alanine (UMA). The protein is UDP-N-acetylmuramoylalanine--D-glutamate ligase of Caldanaerobacter subterraneus subsp. tengcongensis (strain DSM 15242 / JCM 11007 / NBRC 100824 / MB4) (Thermoanaerobacter tengcongensis).